A 625-amino-acid chain; its full sequence is Serine/threonine-protein kinase PknB (625 aa).

The Cytoplasmic portion of the chain corresponds to 1 to 331; the sequence is MTTPQHLSDR…KQRSTSVARW (331 aa). A Protein kinase domain is found at 11–274; the sequence is YELGEILGFG…TAAEMRADLI (264 aa). ATP is bound by residues 17–25, K40, and 93–95; these read LGFGGMSEV and EYV. Residue D138 is the Proton acceptor of the active site. ATP is bound by residues 140–143 and D156; that span reads KPAN. Mg(2+) contacts are provided by N143 and D156. The residue at position 169 (S169) is a Phosphoserine; by autocatalysis. 3 positions are modified to phosphothreonine; by autocatalysis: T171, T173, and T294. S295 carries the post-translational modification Phosphoserine; by autocatalysis. The tract at residues 302–321 is disordered; it reads ADRAGAATQDMPVPRPAGYS. Position 309 is a phosphothreonine; by autocatalysis (T309). A helical transmembrane segment spans residues 332 to 352; sequence LIAVAVLAVLTVVVTVAINMV. Topologically, residues 353–625 are extracellular; that stretch reads GGNPRNVQVP…DAKITLSFAA (273 aa). PASTA domains lie at 355 to 421, 422 to 489, 490 to 556, and 557 to 625; these read NPRN…NVST, GPEQ…VVGA, GPED…RVSK, and GNQF…SFAA. The segment at 591 to 612 is disordered; the sequence is DVRDSGQRTNAVVTQSPSAGTP. Polar residues predominate over residues 597-611; it reads QRTNAVVTQSPSAGT.

It belongs to the protein kinase superfamily. Ser/Thr protein kinase family. As to quaternary structure, homodimer. Post-translationally, autophosphorylated. Dephosphorylated by PstP.

Its subcellular location is the cell membrane. The catalysed reaction is L-seryl-[protein] + ATP = O-phospho-L-seryl-[protein] + ADP + H(+). It catalyses the reaction L-threonyl-[protein] + ATP = O-phospho-L-threonyl-[protein] + ADP + H(+). With respect to regulation, by K-252a. Functionally, protein kinase that regulates many aspects of mycobacterial physiology. Is a key component of a signal transduction pathway that regulates cell growth, cell shape and cell division via phosphorylation of target proteins. Probably phosphorylates RseA. The sequence is that of Serine/threonine-protein kinase PknB (pknB) from Mycolicibacterium smegmatis (strain ATCC 700084 / mc(2)155) (Mycobacterium smegmatis).